We begin with the raw amino-acid sequence, 268 residues long: Glucosamine-6-phosphate deaminase (268 aa).

Asp-72 functions as the Proton acceptor; for enolization step in the catalytic mechanism. The active-site For ring-opening step is Asp-141. His-143 serves as the catalytic Proton acceptor; for ring-opening step. The For ring-opening step role is filled by Glu-148.

This sequence belongs to the glucosamine/galactosamine-6-phosphate isomerase family. NagB subfamily. In terms of assembly, homohexamer.

The enzyme catalyses alpha-D-glucosamine 6-phosphate + H2O = beta-D-fructose 6-phosphate + NH4(+). Its pathway is amino-sugar metabolism; N-acetylneuraminate degradation; D-fructose 6-phosphate from N-acetylneuraminate: step 5/5. Its activity is regulated as follows. Allosterically activated by N-acetylglucosamine 6-phosphate (GlcNAc6P). Catalyzes the reversible isomerization-deamination of glucosamine 6-phosphate (GlcN6P) to form fructose 6-phosphate (Fru6P) and ammonium ion. In Proteus mirabilis (strain HI4320), this protein is Glucosamine-6-phosphate deaminase.